Here is a 306-residue protein sequence, read N- to C-terminus: Aspartate carbamoyltransferase catalytic subunit (306 aa).

Carbamoyl phosphate-binding residues include Arg-55 and Thr-56. Lys-84 serves as a coordination point for L-aspartate. 3 residues coordinate carbamoyl phosphate: Arg-105, His-133, and Gln-136. L-aspartate is bound by residues Arg-166 and Arg-227. Positions 265 and 266 each coordinate carbamoyl phosphate.

Belongs to the aspartate/ornithine carbamoyltransferase superfamily. ATCase family. As to quaternary structure, heterododecamer (2C3:3R2) of six catalytic PyrB chains organized as two trimers (C3), and six regulatory PyrI chains organized as three dimers (R2).

It carries out the reaction carbamoyl phosphate + L-aspartate = N-carbamoyl-L-aspartate + phosphate + H(+). It participates in pyrimidine metabolism; UMP biosynthesis via de novo pathway; (S)-dihydroorotate from bicarbonate: step 2/3. Its function is as follows. Catalyzes the condensation of carbamoyl phosphate and aspartate to form carbamoyl aspartate and inorganic phosphate, the committed step in the de novo pyrimidine nucleotide biosynthesis pathway. This Neisseria meningitidis serogroup C (strain 053442) protein is Aspartate carbamoyltransferase catalytic subunit.